The chain runs to 79 residues: Acyl carrier protein (79 aa).

The Carrier domain occupies 2 to 77 (SDVLERVRKI…DAVKFIQERL (76 aa)). The residue at position 37 (serine 37) is an O-(pantetheine 4'-phosphoryl)serine.

It belongs to the acyl carrier protein (ACP) family. 4'-phosphopantetheine is transferred from CoA to a specific serine of apo-ACP by AcpS. This modification is essential for activity because fatty acids are bound in thioester linkage to the sulfhydryl of the prosthetic group.

It is found in the cytoplasm. The protein operates within lipid metabolism; fatty acid biosynthesis. Its function is as follows. Carrier of the growing fatty acid chain in fatty acid biosynthesis. In Phenylobacterium zucineum (strain HLK1), this protein is Acyl carrier protein.